The sequence spans 348 residues: Ion-translocating oxidoreductase complex subunit D (348 aa).

Over 1-22 (MAFFIASSPHLRSKRSTADVMR) the chain is Cytoplasmic. The next 2 helical transmembrane spans lie at 23 to 43 (WVLV…GYGT) and 44 to 64 (LIQL…IMLL). At 65-71 (RKRSPIS) the chain is on the cytoplasmic side. Residues 72 to 91 (ALRDYSAVVTAWLLAVAIPP) traverse the membrane as a helical segment. The Periplasmic segment spans residues 92–94 (LSP). The helical transmembrane segment at 95–117 (WWVVVIGLIFAIVIAKHLYGGLG) threads the bilayer. Residues 118–125 (QNPFNPAM) are Cytoplasmic-facing. The helical transmembrane segment at 126-146 (IAYVVLLISFPVQMTSWMAPI) threads the bilayer. Topologically, residues 147-213 (KLTAEPSSLV…ETLTQPQFSG (67 aa)) are periplasmic. T187 is modified (FMN phosphoryl threonine). A helical membrane pass occupies residues 214-234 (FAGIGWEWVNIAYLLGGLILL). Topologically, residues 235–242 (KLRIIRWH) are cytoplasmic. Residues 243-263 (IPVAMLAGLVFTALLAQLFAP) traverse the membrane as a helical segment. The Periplasmic segment spans residues 264–265 (GT). The chain crosses the membrane as a helical span at residues 266-286 (TASPMIHLLSGATMLGAFFIA). Topologically, residues 287–299 (TDPVSASTTDKGR) are cytoplasmic. Transmembrane regions (helical) follow at residues 300 to 320 (LIYG…GGFP) and 321 to 341 (DGVA…DYYT). The Cytoplasmic portion of the chain corresponds to 342–348 (KPRTYGH).

It belongs to the NqrB/RnfD family. In terms of assembly, the complex is composed of six subunits: RnfA, RnfB, RnfC, RnfD, RnfE and RnfG. FMN is required as a cofactor.

Its subcellular location is the cell inner membrane. Functionally, part of a membrane-bound complex that couples electron transfer with translocation of ions across the membrane. The protein is Ion-translocating oxidoreductase complex subunit D of Vibrio cholerae serotype O1 (strain ATCC 39541 / Classical Ogawa 395 / O395).